A 256-amino-acid chain; its full sequence is MKIITCYKCVPDEQDIAVNNADGSLDFSKADAKISQYDLNAIEAACQLKQQAAEAQVTALSVGGKALTNAKGRKDVLSRGPDELIVVIDDQFEQALPQQTASALAAAAQKAGFDLILCGDGSSDLYAQQVGLLVGEILNIPAVNGVSKIISLTADTLTVERELEDETETLSIPLPAVVAVSTDINSPQIPSMKAILGAAKKPVQVWSAADIGFNAEAAWSEQQVAAPKQRERQRIVIEGDGEEQIAAFAENLRKVI.

It belongs to the ETF beta-subunit/FixA family. In terms of assembly, heterodimer of FixA and FixB.

It functions in the pathway amine and polyamine metabolism; carnitine metabolism. Required for anaerobic carnitine reduction. May bring reductant to CaiA. The polypeptide is Protein FixA (Escherichia coli O139:H28 (strain E24377A / ETEC)).